The following is a 542-amino-acid chain: Putative cysteine ligase BshC (542 aa).

Positions 458-487 (VAKNAAILQAQIEFLQHALERALLRKHETE) form a coiled coil.

The protein belongs to the BshC family.

Involved in bacillithiol (BSH) biosynthesis. May catalyze the last step of the pathway, the addition of cysteine to glucosamine malate (GlcN-Mal) to generate BSH. This chain is Putative cysteine ligase BshC, found in Geobacillus kaustophilus (strain HTA426).